The chain runs to 95 residues: Small ribosomal subunit protein uS19 (95 aa).

It belongs to the universal ribosomal protein uS19 family.

Its function is as follows. Protein S19 forms a complex with S13 that binds strongly to the 16S ribosomal RNA. The sequence is that of Small ribosomal subunit protein uS19 from Bdellovibrio bacteriovorus (strain ATCC 15356 / DSM 50701 / NCIMB 9529 / HD100).